The sequence spans 279 residues: Methyltransferase trt5 (279 aa).

S-adenosyl-L-methionine is bound by residues 124–125 (DI) and 152–153 (DV).

It belongs to the class I-like SAM-binding methyltransferase superfamily. In terms of assembly, homodimer.

Its pathway is secondary metabolite biosynthesis; terpenoid biosynthesis. In terms of biological role, methyltransferase; part of the gene cluster that mediates the biosynthesis of terretonin, a fungal meroterpenoid that acts as a mycotoxin. The first step of the pathway is the synthesis of 3,5-dimethylorsellinic acid (DMOA) by the polyketide synthase trt4. DMOA is then prenylated into farnesyl-DMOA by the polyprenyl transferase trt2. Methylation by the methyltransferase trt5 then leads to farnesyl-DMOA methyl ester which is further subject to epoxidation by the FAD-dependent monooxygenase trt8 to yield epoxyfarnesyl-DMOA methyl ester. Cyclization of epoxyfarnesyl-DMOA methyl ester by the terpene cyclase trt1 leads to a tetracycle intermediate which is in turn converted to preterretonin. Dehydrogenase trt9 comes next to transform preterretonin to preterrenoid. The FAD-dependent monooxygenase trt3 is then required for the C-hydroxylation at C16 of preterrenoid to yield terrenoid. The cytochrome P450 trt6 catalyzes three successive oxidations to transform terrenoid into an unstable intermediate, which then undergoes the D-ring expansion and unusual rearrangement of the methoxy group to afford the core skeleton of terretonin. Trt14 catalyzes the D-ring expansion of terretonin involving intramolecular methoxy rearrangement as well as the hydrolysis of the expanded D-ring and the methyl ester moiety. Finally, the nonheme iron-dependent dioxygenase trt7 accomplishes the last two oxidation reactions steps to complete the biosynthesis of terretonin. Terretonin C is produced via spontaneous decarboxylation of the terretonin precursor. Another shunt product of the terretonin biosynthesis is dihydrofarnesyl-DMOA, derived from epoxyfarnesyl-DMOA through hydrolysis of the epoxide. The polypeptide is Methyltransferase trt5 (Aspergillus terreus (strain NIH 2624 / FGSC A1156)).